Reading from the N-terminus, the 459-residue chain is ATP synthase subunit beta (459 aa).

148 to 155 (GGAGVGKT) contacts ATP.

Belongs to the ATPase alpha/beta chains family. F-type ATPases have 2 components, CF(1) - the catalytic core - and CF(0) - the membrane proton channel. CF(1) has five subunits: alpha(3), beta(3), gamma(1), delta(1), epsilon(1). CF(0) has three main subunits: a(1), b(2) and c(9-12). The alpha and beta chains form an alternating ring which encloses part of the gamma chain. CF(1) is attached to CF(0) by a central stalk formed by the gamma and epsilon chains, while a peripheral stalk is formed by the delta and b chains.

Its subcellular location is the cell inner membrane. It carries out the reaction ATP + H2O + 4 H(+)(in) = ADP + phosphate + 5 H(+)(out). Functionally, produces ATP from ADP in the presence of a proton gradient across the membrane. The catalytic sites are hosted primarily by the beta subunits. The protein is ATP synthase subunit beta of Cellvibrio japonicus (strain Ueda107) (Pseudomonas fluorescens subsp. cellulosa).